A 667-amino-acid polypeptide reads, in one-letter code: Cylicin-1 (667 aa).

Disordered stretches follow at residues 121-251 and 275-634; these read PYTH…SSNV and SQNN…ILPS. Residues 129-172 show a composition bias toward basic and acidic residues; sequence KKAESKKYKDDKKETALKKISKKDTGPHEVDEKPKRRNKADKTP. Residues 173–182 are compositionally biased toward low complexity; sequence SKSSHGSQLS. The segment covering 187–197 has biased composition (basic and acidic residues); that stretch reads SKSETNPESKD. Low complexity predominate over residues 223–237; that stretch reads STSTKKYSKSSKNNS. Over residues 238–251 the composition is skewed to polar residues; that stretch reads DAVSETCSKNSSNV. Basic and acidic residues-rich tracts occupy residues 284–326, 345–371, 380–394, 417–431, 438–464, 483–506, 521–533, 549–558, and 583–593; these read KKDA…KDTE, SKKDKKKDAKKDAASDAESGDSKDAKK, SKKDNKKKDAKKDAE, SKKDDKKKDAKKDAE, GDSKNAKKDSKKGKKDDKKKDAKKDAV, SKKDKKDLKKDDQKKPAMKSKEST, SKKDTKKTAKKAT, KKTEMFKSSD, and DSKKDAVEPKR. A run of 9 repeats spans residues 287–305, 306–337, 338–368, 369–405, 406–442, 443–475, 476–516, 517–547, and 548–569. Positions 287–569 are 9 X approximate tandem repeats; sequence AKKDAKGKGS…ESEESLFKPG (283 aa). A compositionally biased stretch (pro residues) spans 624-633; the sequence is PLPPCEPILP.

Interacts with proteins of spermatozoa head including ACTL7A, CCIN, FAM209A and SPACA1; the interactions may be necessary for proper acrosome attachment to the nuclear envelope. Testis.

It localises to the cytoplasm. Its subcellular location is the cytoskeleton. The protein localises to the perinuclear theca. The protein resides in the calyx. Its function is as follows. Plays a role in the establishment of normal sperm morphology during spermatogenesis and is required for acrosome attachment to the nuclear envelope. The protein is Cylicin-1 (CYLC1) of Bos taurus (Bovine).